We begin with the raw amino-acid sequence, 471 residues long: Nuclear receptor subfamily 0 group B member 1 (471 aa).

A run of 3 repeats spans residues 1–67 (MAGE…YRCC), 68–134 (FCGE…YRCC), and 135–201 (FCGE…YRCC). The tract at residues 1–253 (MAGEDHQWQG…QRVALKSPQV (253 aa)) is 4 X 67 AA tandem repeats. Short sequence motifs (LXXLL motif) lie at residues 13–17 (LYNML), 80–84 (LYNML), and 147–151 (LYSLL). The stretch at 202 to 253 (FCGEDHPRQSGILCNMPMSAKQTHVAPEAQPGAPWWDPSCAAQRVALKSPQV) is one 4; truncated repeat. The NR LBD domain occupies 210–470 (QSGILCNMPM…DMMLEMLCAK (261 aa)). The short motif at 462-467 (MMLEML) is the AF-2 motif element.

It belongs to the nuclear hormone receptor family. NR0 subfamily. As to quaternary structure, homodimer. Interacts with NR5A1, NR5A2, NR0B2 and with COPS2. Interacts with ESRRB; represses ESRRB activity at the GATA6 promoter.

The protein resides in the nucleus. It localises to the cytoplasm. In terms of biological role, nuclear receptor that lacks a DNA-binding domain and acts as a corepressor that inhibits the transcriptional activity of other nuclear receptors through heterodimeric interactions. Component of a cascade required for the development of the hypothalamic-pituitary-adrenal-gonadal axis. May also have a role in the development of the embryo and in the maintenance of embryonic stem cell pluripotency. The chain is Nuclear receptor subfamily 0 group B member 1 (NR0B1) from Sus scrofa (Pig).